The sequence spans 282 residues: MGYLSSVIPTDGSPVSGGGLSQNGKFSYGYASSPGKRASMEDFYETRIDSVDGQIIGLFGVFDGHGGAKVAEYVKQNLFSHLLRHPKFISDTKVAIDDAYKSTDSEFLESDSSQNQCGSTASTAVLVGDRLFVANVGDSRAIICRGGNAIAVSKDHKPDQTDERQRIEDAGGFVMWAGTWRVGGVLAVSRAFGDKLLKQYVVVDPEIREEVIDHSLEFLILASDGLWDVVTNEEAVDMTRSIHDPEEAAKKLLQEAYKRESSDNITCVVVRFLHGQGSSGYA.

Residues 27–272 (SYGYASSPGK…DNITCVVVRF (246 aa)) form the PPM-type phosphatase domain. Mn(2+)-binding residues include aspartate 63, glycine 64, aspartate 224, and aspartate 263.

It belongs to the PP2C family. Requires Mg(2+) as cofactor. It depends on Mn(2+) as a cofactor.

The catalysed reaction is O-phospho-L-seryl-[protein] + H2O = L-seryl-[protein] + phosphate. The enzyme catalyses O-phospho-L-threonyl-[protein] + H2O = L-threonyl-[protein] + phosphate. This Oryza sativa subsp. japonica (Rice) protein is Probable protein phosphatase 2C 45.